The following is a 228-amino-acid chain: Imidazole glycerol phosphate synthase subunit HisH (228 aa).

The 215-residue stretch at 4–218 folds into the Glutamine amidotransferase type-1 domain; that stretch reads DIAVVDYGMG…VTWNPGEHAS (215 aa). Cys83 serves as the catalytic Nucleophile. Active-site residues include His193 and Glu195.

Heterodimer of HisH and HisF.

It is found in the cytoplasm. It carries out the reaction 5-[(5-phospho-1-deoxy-D-ribulos-1-ylimino)methylamino]-1-(5-phospho-beta-D-ribosyl)imidazole-4-carboxamide + L-glutamine = D-erythro-1-(imidazol-4-yl)glycerol 3-phosphate + 5-amino-1-(5-phospho-beta-D-ribosyl)imidazole-4-carboxamide + L-glutamate + H(+). The enzyme catalyses L-glutamine + H2O = L-glutamate + NH4(+). It participates in amino-acid biosynthesis; L-histidine biosynthesis; L-histidine from 5-phospho-alpha-D-ribose 1-diphosphate: step 5/9. Functionally, IGPS catalyzes the conversion of PRFAR and glutamine to IGP, AICAR and glutamate. The HisH subunit catalyzes the hydrolysis of glutamine to glutamate and ammonia as part of the synthesis of IGP and AICAR. The resulting ammonia molecule is channeled to the active site of HisF. The protein is Imidazole glycerol phosphate synthase subunit HisH of Thiobacillus denitrificans (strain ATCC 25259 / T1).